The following is a 490-amino-acid chain: POC1 centriolar protein homolog B (490 aa).

7 WD repeats span residues 16-55, 58-97, 100-139, 142-181, 184-223, 226-265, and 268-307; these read GHKD…RAFR, GHTD…ESTV, AHTA…FLYS, RHTN…CINI, DYGG…LIQH, VHNA…LIYT, and GHKG…LNYR. Polar residues predominate over residues 375–388; the sequence is DGASSSRAQFTSGM. Positions 375-427 are disordered; that stretch reads DGASSSRAQFTSGMDSGPFRTHTQAREEEDENQEERFAGGMTASPAERSGIPS. Residues 431–463 are a coiled coil; it reads STLENIVQQLDILTQTVAVLEERLTLTEDKLRT.

It belongs to the WD repeat POC1 family.

Its subcellular location is the cytoplasm. It localises to the cytoskeleton. The protein localises to the microtubule organizing center. The protein resides in the centrosome. It is found in the centriole. Functionally, plays an important role in centriole assembly and/or stability and ciliogenesis. Involved in early steps of centriole duplication, as well as in the later steps of centriole length control. The sequence is that of POC1 centriolar protein homolog B from Danio rerio (Zebrafish).